A 474-amino-acid polypeptide reads, in one-letter code: Aspartyl/glutamyl-tRNA(Asn/Gln) amidotransferase subunit B (474 aa).

This sequence belongs to the GatB/GatE family. GatB subfamily. In terms of assembly, heterotrimer of A, B and C subunits.

The catalysed reaction is L-glutamyl-tRNA(Gln) + L-glutamine + ATP + H2O = L-glutaminyl-tRNA(Gln) + L-glutamate + ADP + phosphate + H(+). It carries out the reaction L-aspartyl-tRNA(Asn) + L-glutamine + ATP + H2O = L-asparaginyl-tRNA(Asn) + L-glutamate + ADP + phosphate + 2 H(+). In terms of biological role, allows the formation of correctly charged Asn-tRNA(Asn) or Gln-tRNA(Gln) through the transamidation of misacylated Asp-tRNA(Asn) or Glu-tRNA(Gln) in organisms which lack either or both of asparaginyl-tRNA or glutaminyl-tRNA synthetases. The reaction takes place in the presence of glutamine and ATP through an activated phospho-Asp-tRNA(Asn) or phospho-Glu-tRNA(Gln). The chain is Aspartyl/glutamyl-tRNA(Asn/Gln) amidotransferase subunit B from Limosilactobacillus reuteri (strain DSM 20016) (Lactobacillus reuteri).